A 277-amino-acid chain; its full sequence is Probable endonuclease 4 (277 aa).

His-70, His-108, Glu-143, Asp-176, His-179, His-210, Asp-223, His-225, and Glu-255 together coordinate Zn(2+).

Belongs to the AP endonuclease 2 family. Zn(2+) is required as a cofactor.

It catalyses the reaction Endonucleolytic cleavage to 5'-phosphooligonucleotide end-products.. In terms of biological role, endonuclease IV plays a role in DNA repair. It cleaves phosphodiester bonds at apurinic or apyrimidinic (AP) sites, generating a 3'-hydroxyl group and a 5'-terminal sugar phosphate. This chain is Probable endonuclease 4, found in Mycoplasmopsis synoviae (strain 53) (Mycoplasma synoviae).